Here is a 607-residue protein sequence, read N- to C-terminus: F-box protein At-B (607 aa).

Residues 9–47 enclose the F-box domain; it reads LAEEILKRLDLENLCSVACVSTTLRSAVVSGVLPSLTSL. LRR repeat units lie at residues 51–76, 77–99, 100–125, 130–155, 228–253, 262–286, 295–320, 321–346, 347–372, 373–397, 398–422, 424–447, 448–477, 478–503, 504–536, and 537–563; these read VFSP…TLNC, LRLN…HLLR, CSLL…TLEM, SPDV…QLNI, LDLI…DLED, DNDL…SLVR, FKRI…RLGG, FPKV…EVRG, AFLL…RLST, CPLI…DLGS, CKSI…NLAG, DVTD…SLRG, CRRV…DLGH, MPGI…SIRS, CFHV…NVHN, and CVSL…GMGQ.

In Arabidopsis thaliana (Mouse-ear cress), this protein is F-box protein At-B (ATB).